The chain runs to 177 residues: B-phycoerythrin beta chain (177 aa).

Cys50 and Cys61 together coordinate (2R,3E)-phycoerythrobilin. Asn72 is modified (N4-methylasparagine). Positions 82 and 158 each coordinate (2R,3E)-phycoerythrobilin.

This sequence belongs to the phycobiliprotein family. In terms of assembly, heterotetramer of one alpha-1, one alpha-2, and two beta chains. Contains three covalently linked bilin chromophores.

Its subcellular location is the plastid. It is found in the chloroplast thylakoid membrane. Light-harvesting photosynthetic bile pigment-protein from the phycobiliprotein complex. This is B-phycoerythrin beta chain (cpeB) from Guillardia theta (Cryptophyte).